Reading from the N-terminus, the 212-residue chain is Golgi SNAP receptor complex member 2 (212 aa).

At Met-1 the chain carries N-acetylmethionine. Residues 1–190 (MDPLFQQTHK…LIEKRAFQDK (190 aa)) are Cytoplasmic-facing. Residues 61 to 107 (NKRQNARLRVDQLKYDVQHLQTALRNFQHRRHAREQQERQREELLSR) adopt a coiled-coil conformation. An IxM motif; signal for cargo packaging into COPII-coated vesicles motif is present at residues 118–120 (IPM). Residues 191–211 (YFMIGGMLLTCVVMFLVVQYL) form a helical; Anchor for type IV membrane protein membrane-spanning segment. Position 212 (Thr-212) is a topological domain, vesicular.

This sequence belongs to the GOSR2 family. In terms of assembly, part of a unique SNARE complex composed of the Golgi SNAREs GOSR1, STX5 and YKT6. Interacts (via IxM motif) with SEC24C and SEC24D; mediates GOSR2 packaging into COPII-coated vesicles. Interacts with BET1.

It is found in the golgi apparatus. It localises to the cis-Golgi network membrane. The protein localises to the golgi apparatus membrane. The protein resides in the endoplasmic reticulum membrane. Its function is as follows. Involved in transport of proteins from the cis/medial-Golgi to the trans-Golgi network. In Homo sapiens (Human), this protein is Golgi SNAP receptor complex member 2 (GOSR2).